A 355-amino-acid chain; its full sequence is S-adenosylmethionine:tRNA ribosyltransferase-isomerase (355 aa).

The protein belongs to the QueA family. Monomer.

The protein resides in the cytoplasm. The enzyme catalyses 7-aminomethyl-7-carbaguanosine(34) in tRNA + S-adenosyl-L-methionine = epoxyqueuosine(34) in tRNA + adenine + L-methionine + 2 H(+). It functions in the pathway tRNA modification; tRNA-queuosine biosynthesis. In terms of biological role, transfers and isomerizes the ribose moiety from AdoMet to the 7-aminomethyl group of 7-deazaguanine (preQ1-tRNA) to give epoxyqueuosine (oQ-tRNA). This is S-adenosylmethionine:tRNA ribosyltransferase-isomerase from Pectobacterium atrosepticum (strain SCRI 1043 / ATCC BAA-672) (Erwinia carotovora subsp. atroseptica).